Here is a 676-residue protein sequence, read N- to C-terminus: Methionine--tRNA ligase (676 aa).

Positions 15 to 25 (PYANGSIHLGH) match the 'HIGH' region motif. Zn(2+) contacts are provided by Cys-146, Cys-149, Cys-159, and Cys-162. The 'KMSKS' region motif lies at 332-336 (KMSKS). An ATP-binding site is contributed by Lys-335. Residues 574 to 676 (DFAKVDMRIA…SGAQPGQQVK (103 aa)) form the tRNA-binding domain.

Belongs to the class-I aminoacyl-tRNA synthetase family. MetG type 1 subfamily. In terms of assembly, homodimer. Zn(2+) is required as a cofactor.

The protein resides in the cytoplasm. It carries out the reaction tRNA(Met) + L-methionine + ATP = L-methionyl-tRNA(Met) + AMP + diphosphate. Its function is as follows. Is required not only for elongation of protein synthesis but also for the initiation of all mRNA translation through initiator tRNA(fMet) aminoacylation. This chain is Methionine--tRNA ligase, found in Erwinia tasmaniensis (strain DSM 17950 / CFBP 7177 / CIP 109463 / NCPPB 4357 / Et1/99).